Consider the following 374-residue polypeptide: F(420)H(2) dehydrogenase subunit D (374 aa).

It belongs to the complex I 49 kDa subunit family. As to quaternary structure, the FPO complex is composed of at least 13 different subunits.

It localises to the cell inner membrane. The catalysed reaction is methanophenazine + reduced coenzyme F420-(gamma-L-Glu)(n) = dihydromethanophenazine + oxidized coenzyme F420-(gamma-L-Glu)(n) + H(+). In terms of biological role, component of the F(420)H(2) dehydrogenase (FPO complex) which is part of the energy-conserving F(420)H(2):heterodisulfide oxidoreductase system. The membrane-bound electron transfer system of the complex plays an important role in the metabolism of methylotrophic methanogens when the organisms grow on methanol or methylamines. Catalyzes the oxidation of methanophenazine to dihydromethanophenazine. It shuttles electrons from F(420)H(2), via FAD and iron-sulfur (Fe-S) centers, to methanophenazine (an electron carrier in the membrane). It couples the redox reaction to proton translocation (for every two electrons transferred, two hydrogen ions are translocated across the cytoplasmic membrane), and thus conserves the redox energy in a proton gradient. It also catalyzes the oxidation of F(420)H(2) with quinones such as 2,3-dimethyl-1,4-naphthoquinone, 2-methyl-1,4-naphthoquinone and tetramethyl-p-benzoquinone. This Methanosarcina mazei (strain ATCC BAA-159 / DSM 3647 / Goe1 / Go1 / JCM 11833 / OCM 88) (Methanosarcina frisia) protein is F(420)H(2) dehydrogenase subunit D (fpoD).